Here is a 194-residue protein sequence, read N- to C-terminus: Holliday junction branch migration complex subunit RuvA (194 aa).

The tract at residues 1 to 64 (MIGRITGLLL…EDVHLLFGFM (64 aa)) is domain I. Residues 65–140 (TEQERALFRQ…KIDPVAILSE (76 aa)) are domain II. Residues 140-143 (EAGA) are flexible linker. A domain III region spans residues 144–194 (AASNVDKDILSALLALGYNGREVNRALEQLSEGVTVSDGIMQSLKFLSKVK).

This sequence belongs to the RuvA family. As to quaternary structure, homotetramer. Forms an RuvA(8)-RuvB(12)-Holliday junction (HJ) complex. HJ DNA is sandwiched between 2 RuvA tetramers; dsDNA enters through RuvA and exits via RuvB. An RuvB hexamer assembles on each DNA strand where it exits the tetramer. Each RuvB hexamer is contacted by two RuvA subunits (via domain III) on 2 adjacent RuvB subunits; this complex drives branch migration. In the full resolvosome a probable DNA-RuvA(4)-RuvB(12)-RuvC(2) complex forms which resolves the HJ.

The protein localises to the cytoplasm. Its function is as follows. The RuvA-RuvB-RuvC complex processes Holliday junction (HJ) DNA during genetic recombination and DNA repair, while the RuvA-RuvB complex plays an important role in the rescue of blocked DNA replication forks via replication fork reversal (RFR). RuvA specifically binds to HJ cruciform DNA, conferring on it an open structure. The RuvB hexamer acts as an ATP-dependent pump, pulling dsDNA into and through the RuvAB complex. HJ branch migration allows RuvC to scan DNA until it finds its consensus sequence, where it cleaves and resolves the cruciform DNA. This chain is Holliday junction branch migration complex subunit RuvA, found in Nitrosomonas eutropha (strain DSM 101675 / C91 / Nm57).